Reading from the N-terminus, the 561-residue chain is Ribulokinase (561 aa).

It belongs to the ribulokinase family.

The enzyme catalyses D-ribulose + ATP = D-ribulose 5-phosphate + ADP + H(+). It carries out the reaction L-ribulose + ATP = L-ribulose 5-phosphate + ADP + H(+). Its pathway is carbohydrate degradation; L-arabinose degradation via L-ribulose; D-xylulose 5-phosphate from L-arabinose (bacterial route): step 2/3. The polypeptide is Ribulokinase (Shouchella clausii (strain KSM-K16) (Alkalihalobacillus clausii)).